Here is a 257-residue protein sequence, read N- to C-terminus: Receptor expression-enhancing protein 4 (257 aa).

Transmembrane regions (helical) follow at residues 1–21 and 42–62; these read MVSW…CPAY and WIVF…ISWF. Phosphoserine occurs at positions 152 and 194. The segment at 178–257 is disordered; the sequence is PHQRPPIGYR…KKTVPSDMDS (80 aa). The residue at position 196 (Thr196) is a Phosphothreonine. The residue at position 202 (Ser202) is a Phosphoserine. At Thr250 the chain carries Phosphothreonine. A Phosphoserine modification is found at Ser253.

It belongs to the DP1 family.

It localises to the endoplasmic reticulum membrane. Its function is as follows. Microtubule-binding protein required to ensure proper cell division and nuclear envelope reassembly by sequestering the endoplasmic reticulum away from chromosomes during mitosis. Probably acts by clearing the endoplasmic reticulum membrane from metaphase chromosomes. This chain is Receptor expression-enhancing protein 4 (REEP4), found in Pongo abelii (Sumatran orangutan).